The sequence spans 507 residues: Extracellular elastase (507 aa).

An N-terminal signal peptide occupies residues 1-28; that stretch reads MKNFSKFALTSIAALTVASPLVNTEVDA. Positions 29–207 are excised as a propeptide; the sequence is KDKVSATQNI…VVDKLNMIKE (179 aa). D347 is a Ca(2+) binding site. H351 is a Zn(2+) binding site. Residue E352 is part of the active site. Zn(2+) contacts are provided by H355 and E375. Residues D386, E388, D389, L391, E394, Y397, T398, V401, and D404 each coordinate Ca(2+). The Proton donor role is filled by H435.

Belongs to the peptidase M4 family. Requires Ca(2+) as cofactor. Zn(2+) serves as cofactor.

The protein localises to the secreted. Its function is as follows. Protease that has a low substrate specificity. Glucagon is preferentially cleaved between aromatic (Phe) and hydrophobic (Val) amino acids. Hydrolyzes casein and elastin. This chain is Extracellular elastase (sepA), found in Staphylococcus epidermidis (strain ATCC 12228 / FDA PCI 1200).